The sequence spans 551 residues: Hyaluronan synthase 2 (551 aa).

The Cytoplasmic segment spans residues 1–11; it reads MHCERFICILR. A helical membrane pass occupies residues 12-32; that stretch reads IIGTTLFGVSLLLGISAAYIV. Residues 33-45 are Extracellular-facing; that stretch reads GYQFIQTDNYYFS. Residues 46–66 form a helical membrane-spanning segment; the sequence is FGLYGAILALHLIIQSLFAFL. Over 67–374 the chain is Cytoplasmic; that stretch reads EHRKMKRSLE…NSLWFHKHHL (308 aa). The chain crosses the membrane as a helical span at residues 375 to 395; it reads WMTYEAVITGFFPFFLIATVI. Topologically, residues 396–402 are extracellular; that stretch reads QLFYRGR. A helical membrane pass occupies residues 403–423; the sequence is IWNILLFLLTVQLVGLIKSSF. At 424–429 the chain is on the cytoplasmic side; that stretch reads ASALRG. A helical transmembrane segment spans residues 430-450; it reads NIVMVFMSFYSVLYMSSLLPA. Residues 451–470 lie on the Extracellular side of the membrane; sequence KMFAIATINKAGWGTSGRKT. A helical membrane pass occupies residues 471 to 491; the sequence is IVVNFIGLIPITVWFTILLGG. The Cytoplasmic segment spans residues 492 to 509; the sequence is VCYTIWRETKKPFSESEK. The helical transmembrane segment at 510 to 530 threads the bilayer; sequence IVLAVGAILYACYWVMLLTMY. The Extracellular portion of the chain corresponds to 531–551; that stretch reads VSLVMKCGRRRKEPQHDLVLA.

This sequence belongs to the NodC/HAS family. In terms of assembly, homodimer; dimerization promotes enzymatic activity. The cofactor is Mg(2+).

The protein resides in the cell membrane. Its subcellular location is the endoplasmic reticulum membrane. The protein localises to the vesicle. It localises to the golgi apparatus membrane. It is found in the lysosome. It carries out the reaction [hyaluronan](n) + UDP-N-acetyl-alpha-D-glucosamine = N-acetyl-beta-D-glucosaminyl-(1-&gt;4)-[hyaluronan](n) + UDP + H(+). The enzyme catalyses N-acetyl-beta-D-glucosaminyl-(1-&gt;4)-[hyaluronan](n) + UDP-alpha-D-glucuronate = [hyaluronan](n+1) + UDP + H(+). It functions in the pathway glycan biosynthesis; hyaluronan biosynthesis. Functionally, catalyzes the addition of GlcNAc or GlcUA monosaccharides to the nascent hyaluronan polymer. Therefore, it is essential to hyaluronan synthesis a major component of most extracellular matrices that has a structural role in tissues architectures and regulates cell adhesion, migration and differentiation. This is one of three isoenzymes responsible for cellular hyaluronan synthesis and it is particularly responsible for the synthesis of high molecular mass hyaluronan. In Xenopus laevis (African clawed frog), this protein is Hyaluronan synthase 2 (has2).